A 133-amino-acid polypeptide reads, in one-letter code: Large ribosomal subunit protein uL14 (133 aa).

This sequence belongs to the universal ribosomal protein uL14 family. Part of the 50S ribosomal subunit. Forms a cluster with proteins L3 and L24e, part of which may contact the 16S rRNA in 2 intersubunit bridges.

Functionally, binds to 23S rRNA. Forms part of two intersubunit bridges in the 70S ribosome. This chain is Large ribosomal subunit protein uL14, found in Nanoarchaeum equitans (strain Kin4-M).